The chain runs to 319 residues: Small ribosomal subunit protein mS35 (319 aa).

The N-terminal 30 residues, 1-30 (MKVPLGLWKVSRGNLWSTQKRVLTMSRCLN), are a transit peptide targeting the mitochondrion.

The protein belongs to the mitochondrion-specific ribosomal protein mS35 family. As to quaternary structure, component of the mitochondrial small ribosomal subunit (mt-SSU). Mature yeast 74S mitochondrial ribosomes consist of a small (37S) and a large (54S) subunit. The 37S small subunit contains a 15S ribosomal RNA (15S mt-rRNA) and 34 different proteins. The 54S large subunit contains a 21S rRNA (21S mt-rRNA) and 46 different proteins.

It localises to the mitochondrion. Functionally, component of the mitochondrial ribosome (mitoribosome), a dedicated translation machinery responsible for the synthesis of mitochondrial genome-encoded proteins, including at least some of the essential transmembrane subunits of the mitochondrial respiratory chain. The mitoribosomes are attached to the mitochondrial inner membrane and translation products are cotranslationally integrated into the membrane. This is Small ribosomal subunit protein mS35 (RSM24) from Saccharomyces cerevisiae (strain ATCC 204508 / S288c) (Baker's yeast).